The following is a 330-amino-acid chain: Aspartate--ammonia ligase (330 aa).

The protein belongs to the class-II aminoacyl-tRNA synthetase family. AsnA subfamily.

The protein localises to the cytoplasm. The catalysed reaction is L-aspartate + NH4(+) + ATP = L-asparagine + AMP + diphosphate + H(+). It functions in the pathway amino-acid biosynthesis; L-asparagine biosynthesis; L-asparagine from L-aspartate (ammonia route): step 1/1. The polypeptide is Aspartate--ammonia ligase (Aeromonas salmonicida (strain A449)).